Reading from the N-terminus, the 404-residue chain is CCA-adding enzyme (404 aa).

Positions 27 and 30 each coordinate ATP. CTP contacts are provided by Gly-27 and Arg-30. Mg(2+)-binding residues include Asp-40 and Asp-42. Residues Arg-111, Asp-154, Arg-157, Arg-160, and Arg-163 each coordinate ATP. CTP contacts are provided by Arg-111, Asp-154, Arg-157, Arg-160, and Arg-163.

Belongs to the tRNA nucleotidyltransferase/poly(A) polymerase family. Bacterial CCA-adding enzyme type 3 subfamily. In terms of assembly, homodimer. Mg(2+) serves as cofactor.

It carries out the reaction a tRNA precursor + 2 CTP + ATP = a tRNA with a 3' CCA end + 3 diphosphate. It catalyses the reaction a tRNA with a 3' CCA end + 2 CTP + ATP = a tRNA with a 3' CCACCA end + 3 diphosphate. In terms of biological role, catalyzes the addition and repair of the essential 3'-terminal CCA sequence in tRNAs without using a nucleic acid template. Adds these three nucleotides in the order of C, C, and A to the tRNA nucleotide-73, using CTP and ATP as substrates and producing inorganic pyrophosphate. tRNA 3'-terminal CCA addition is required both for tRNA processing and repair. Also involved in tRNA surveillance by mediating tandem CCA addition to generate a CCACCA at the 3' terminus of unstable tRNAs. While stable tRNAs receive only 3'-terminal CCA, unstable tRNAs are marked with CCACCA and rapidly degraded. This is CCA-adding enzyme from Geobacillus kaustophilus (strain HTA426).